Here is a 344-residue protein sequence, read N- to C-terminus: Plastoglobule-localized metallopeptidase 48, chloroplastic (344 aa).

The transit peptide at 1–47 (MAVSVSAPVLSLCYNQSGELSRSLGYRLPKKVGFSSGRRSVSYIGFG) directs the protein to the chloroplast. 2 helical membrane passes run 102–122 (LLGS…SVLV) and 169–189 (FIVV…QAVL). His191 is a binding site for Zn(2+). Glu192 is a catalytic residue. His195 is a Zn(2+) binding site. The helical transmembrane segment at 201–221 (GVWLTFANILTLGAYTVPAFG) threads the bilayer. Glu240 contacts Zn(2+). Residues 256–272 (VVVSVLMKLAGGCPSIA) form a helical membrane-spanning segment.

The protein belongs to the peptidase M48 family. M48D subfamily. In terms of assembly, interacts with plastoglobule (PG) core proteins ABC1K3, PES1 and CCD4. Requires Zn(2+) as cofactor. Mostly expressed in flowers (e.g. sepals, petals and stamen), seeds, leaves and cotyledons.

The protein localises to the plastid. It localises to the chloroplast. It is found in the plastoglobule. Its subcellular location is the chloroplast membrane. In terms of biological role, metalloendopeptidase with a Zn-dependent proteolytic activity and substrate cleavage upstream of hydrophobic residues. Positive regulator of senescence, probably by degrading CCD4, thus participating in the controlled removal of carotenoids from the thylakoid membrane during the senescence process. This chain is Plastoglobule-localized metallopeptidase 48, chloroplastic, found in Arabidopsis thaliana (Mouse-ear cress).